The sequence spans 289 residues: Probable ABC transporter permease protein BruAb2_0483 (289 aa).

A run of 6 helical transmembrane segments spans residues 9 to 29 (FLILPSLLLAAVVIFWPVVHL), 70 to 90 (VWTVAVVGGALVLSIPVAIIL), 99 to 119 (VARVIIMLPWAVSLTMTAIFW), 144 to 166 (IQWLASAATAFPMQILVGILVTV), 213 to 233 (IAIVLNTIYVFNSFPIIWVMT), and 258 to 278 (FGEASAVSLIMLAILLVFTVI). Residues 65 to 279 (LWRTAVWTVA…AILLVFTVIY (215 aa)) form the ABC transmembrane type-1 domain.

The protein belongs to the binding-protein-dependent transport system permease family. The complex is composed of two ATP-binding proteins (BruAb2_0487), two transmembrane proteins (BruAb2_0483) and a solute-binding protein (BruAb2_0484).

It localises to the cell inner membrane. Its function is as follows. Probably part of an ABC transporter complex. Probably responsible for the translocation of the substrate across the membrane. The protein is Probable ABC transporter permease protein BruAb2_0483 of Brucella abortus biovar 1 (strain 9-941).